The primary structure comprises 186 residues: Bilin biosynthesis protein CpeZ (186 aa).

Functionally, involved in the biosynthesis of bilin. The polypeptide is Bilin biosynthesis protein CpeZ (cpeZ) (Synechococcus sp. (strain WH8020)).